Consider the following 147-residue polypeptide: Large ribosomal subunit protein bL9 (147 aa).

Belongs to the bacterial ribosomal protein bL9 family.

In terms of biological role, binds to the 23S rRNA. The polypeptide is Large ribosomal subunit protein bL9 (Bacteroides fragilis (strain ATCC 25285 / DSM 2151 / CCUG 4856 / JCM 11019 / LMG 10263 / NCTC 9343 / Onslow / VPI 2553 / EN-2)).